We begin with the raw amino-acid sequence, 274 residues long: Chemotaxis protein methyltransferase 1 (274 aa).

Residues 1 to 274 (MSAANADFEL…CSPGIIYRAK (274 aa)) form the CheR-type methyltransferase domain. Residues Asn-72, Thr-74, Arg-78, Glu-115, Asp-144, 200–201 (NL), and 217–218 (RN) contribute to the S-adenosyl-L-methionine site.

It catalyses the reaction L-glutamyl-[protein] + S-adenosyl-L-methionine = [protein]-L-glutamate 5-O-methyl ester + S-adenosyl-L-homocysteine. Its function is as follows. Methylation of the membrane-bound methyl-accepting chemotaxis proteins (MCP) to form gamma-glutamyl methyl ester residues in MCP. This chain is Chemotaxis protein methyltransferase 1 (cheR1), found in Pseudomonas aeruginosa (strain ATCC 15692 / DSM 22644 / CIP 104116 / JCM 14847 / LMG 12228 / 1C / PRS 101 / PAO1).